The sequence spans 378 residues: Cobalt-precorrin-5B C(1)-methyltransferase (378 aa).

This sequence belongs to the CbiD family.

It catalyses the reaction Co-precorrin-5B + S-adenosyl-L-methionine = Co-precorrin-6A + S-adenosyl-L-homocysteine. It participates in cofactor biosynthesis; adenosylcobalamin biosynthesis; cob(II)yrinate a,c-diamide from sirohydrochlorin (anaerobic route): step 6/10. In terms of biological role, catalyzes the methylation of C-1 in cobalt-precorrin-5B to form cobalt-precorrin-6A. This Photorhabdus laumondii subsp. laumondii (strain DSM 15139 / CIP 105565 / TT01) (Photorhabdus luminescens subsp. laumondii) protein is Cobalt-precorrin-5B C(1)-methyltransferase.